The following is a 151-amino-acid chain: MPIWVDADACPKPVKEILFRAAHQRQILLTLVANQYIAVPASPFIKSLQVSSGFDVADNHIVASLVAGDLVITADIPLAADAIAKGAAVINPRGQEYTKDSIGARLNMRDFMETMRSSGVVMQDGPPPFSQQDRQSFANALDRWIARQRKI.

It belongs to the UPF0178 family.

The sequence is that of UPF0178 protein CJA_1978 from Cellvibrio japonicus (strain Ueda107) (Pseudomonas fluorescens subsp. cellulosa).